The primary structure comprises 369 residues: Phenylalanine--tRNA ligase alpha subunit (369 aa).

A Mg(2+)-binding site is contributed by Glu-269.

The protein belongs to the class-II aminoacyl-tRNA synthetase family. Phe-tRNA synthetase alpha subunit type 1 subfamily. In terms of assembly, tetramer of two alpha and two beta subunits. The cofactor is Mg(2+).

The protein resides in the cytoplasm. The enzyme catalyses tRNA(Phe) + L-phenylalanine + ATP = L-phenylalanyl-tRNA(Phe) + AMP + diphosphate + H(+). The chain is Phenylalanine--tRNA ligase alpha subunit from Brucella canis (strain ATCC 23365 / NCTC 10854 / RM-666).